The chain runs to 210 residues: Orotate phosphoribosyltransferase (210 aa).

Residues R97, K98, and N125–S133 contribute to the 5-phospho-alpha-D-ribose 1-diphosphate site. Residues S129 and R157 each contribute to the orotate site.

It belongs to the purine/pyrimidine phosphoribosyltransferase family. PyrE subfamily. In terms of assembly, homodimer. The cofactor is Mg(2+).

The catalysed reaction is orotidine 5'-phosphate + diphosphate = orotate + 5-phospho-alpha-D-ribose 1-diphosphate. The protein operates within pyrimidine metabolism; UMP biosynthesis via de novo pathway; UMP from orotate: step 1/2. In terms of biological role, catalyzes the transfer of a ribosyl phosphate group from 5-phosphoribose 1-diphosphate to orotate, leading to the formation of orotidine monophosphate (OMP). In Chlamydia pneumoniae (Chlamydophila pneumoniae), this protein is Orotate phosphoribosyltransferase.